A 452-amino-acid chain; its full sequence is Glutamyl-tRNA(Gln) amidotransferase subunit A (452 aa).

Residues K56 and S131 each act as charge relay system in the active site. The Acyl-ester intermediate role is filled by S155.

The protein belongs to the amidase family. GatA subfamily. Heterotrimer of A, B and C subunits.

The enzyme catalyses L-glutamyl-tRNA(Gln) + L-glutamine + ATP + H2O = L-glutaminyl-tRNA(Gln) + L-glutamate + ADP + phosphate + H(+). In terms of biological role, allows the formation of correctly charged Gln-tRNA(Gln) through the transamidation of misacylated Glu-tRNA(Gln) in organisms which lack glutaminyl-tRNA synthetase. The reaction takes place in the presence of glutamine and ATP through an activated gamma-phospho-Glu-tRNA(Gln). The protein is Glutamyl-tRNA(Gln) amidotransferase subunit A of Campylobacter curvus (strain 525.92).